The primary structure comprises 461 residues: Nuclear distribution protein PAC1 (461 aa).

The 33-residue stretch at 9 to 41 (QAEELHKAIIAYLSANNLSSSATALRTELGLAE) folds into the LisH domain. Residues 61–88 (TSVVRLQKKIMDLESRNNALQSELDNAT) adopt a coiled-coil conformation. 8 WD repeats span residues 114–155 (SHQN…RTIK), 157–197 (HTRP…KNIR), 201–248 (GHDH…CLKT), 251–290 (GHTA…PENR), 295–355 (GHDH…LKTL), 357–396 (GHDN…KCVK), 401–444 (VHER…VRIR), and 446–461 (VIAT…IFAN).

It belongs to the WD repeat LIS1/nudF family. Self-associates. Interacts with NDL1 and dynein.

Its subcellular location is the cytoplasm. It is found in the cytoskeleton. It localises to the spindle pole. Functionally, positively regulates the activity of the minus-end directed microtubule motor protein dynein. May enhance dynein-mediated microtubule sliding by targeting dynein to the microtubule plus end. Required for nuclear migration during vegetative growth as well as development. Required for retrograde early endosome (EE) transport from the hyphal tip. Required for localization of dynein to the mitotic spindle poles. Recruits additional proteins to the dynein complex at SPBs. The chain is Nuclear distribution protein PAC1 from Pyricularia oryzae (strain 70-15 / ATCC MYA-4617 / FGSC 8958) (Rice blast fungus).